The sequence spans 281 residues: MGQKINPHGFRLGITTGWKSRWYADKQYAEYVKEDVAIRRLLSTGLERAGIADVEIERTRDRVRVDIHTARPGIVIGRRGTEADRIRADLEKLTCKQVQLNILEVKNPESQAQLVAQGVAEQLSNRVAFRRAMRKAIQSAMRQPNVKGIRVQCSGRLGGAEMSRSEFYREGRVPLHTLRADIDYGLHEAKTTFGRIGVKVWIYKGDIVGGKREVTAVAPAGAERARRERPSGTRPRRSGAAGTTVTGTDAGRAVGGQESAATNIGHSDDSVVTHEPQIAES.

A KH type-2 domain is found at 38–106 (IRRLLSTGLE…QVQLNILEVK (69 aa)). The tract at residues 218–281 (APAGAERARR…VTHEPQIAES (64 aa)) is disordered. A compositionally biased stretch (low complexity) spans 238–256 (SGAAGTTVTGTDAGRAVGG).

It belongs to the universal ribosomal protein uS3 family. Part of the 30S ribosomal subunit. Forms a tight complex with proteins S10 and S14.

Its function is as follows. Binds the lower part of the 30S subunit head. Binds mRNA in the 70S ribosome, positioning it for translation. The sequence is that of Small ribosomal subunit protein uS3 from Mycobacterium leprae (strain Br4923).